A 279-amino-acid chain; its full sequence is Ribosomal RNA small subunit methyltransferase A (279 aa).

Residues histidine 15, leucine 17, glycine 42, glutamate 64, aspartate 89, and asparagine 109 each coordinate S-adenosyl-L-methionine.

Belongs to the class I-like SAM-binding methyltransferase superfamily. rRNA adenine N(6)-methyltransferase family. RsmA subfamily.

The protein localises to the cytoplasm. The enzyme catalyses adenosine(1518)/adenosine(1519) in 16S rRNA + 4 S-adenosyl-L-methionine = N(6)-dimethyladenosine(1518)/N(6)-dimethyladenosine(1519) in 16S rRNA + 4 S-adenosyl-L-homocysteine + 4 H(+). Functionally, specifically dimethylates two adjacent adenosines (A1518 and A1519) in the loop of a conserved hairpin near the 3'-end of 16S rRNA in the 30S particle. May play a critical role in biogenesis of 30S subunits. The polypeptide is Ribosomal RNA small subunit methyltransferase A (Prochlorococcus marinus (strain SARG / CCMP1375 / SS120)).